Consider the following 381-residue polypeptide: Pentraxin-related protein PTX3 (381 aa).

The signal sequence occupies residues 1-17 (MHLPAILLCALWSAVVA). Intrachain disulfides connect Cys179-Cys357 and Cys210-Cys271. The 203-residue stretch at 179 to 381 (CETAIFFPMR…QAHGGAQYVS (203 aa)) folds into the Pentraxin (PTX) domain. N-linked (GlcNAc...) asparagine glycosylation is present at Asn220.

As to quaternary structure, homooctamer; disulfide-linked. Binds to C1q.

It is found in the secreted. Plays a role in the regulation of innate resistance to pathogens, inflammatory reactions, possibly clearance of self-components and female fertility. This is Pentraxin-related protein PTX3 (Ptx3) from Mus musculus (Mouse).